The following is a 35-amino-acid chain: Potassium channel toxin alpha-KTx 6.15 (35 aa).

Intrachain disulfides connect Cys3-Cys24, Cys9-Cys29, Cys13-Cys31, and Cys19-Cys34.

The protein belongs to the short scorpion toxin superfamily. Potassium channel inhibitor family. Alpha-KTx 06 subfamily. In terms of tissue distribution, expressed by the venom gland.

It is found in the secreted. Functionally, blocks voltage-gated potassium channels rKv1.1/KCNA1 (IC(50)=13 nM), rKv1.2/KCNA2 (IC(50)=16 nM) and rKv1.3/KCNA3 (IC(50)=2 nM). In Hemiscorpius lepturus (Scorpion), this protein is Potassium channel toxin alpha-KTx 6.15.